We begin with the raw amino-acid sequence, 717 residues long: Glycine--tRNA ligase beta subunit (717 aa).

Belongs to the class-II aminoacyl-tRNA synthetase family. Tetramer of two alpha and two beta subunits.

The protein resides in the cytoplasm. The catalysed reaction is tRNA(Gly) + glycine + ATP = glycyl-tRNA(Gly) + AMP + diphosphate. This is Glycine--tRNA ligase beta subunit from Agrobacterium fabrum (strain C58 / ATCC 33970) (Agrobacterium tumefaciens (strain C58)).